The chain runs to 343 residues: Glyceraldehyde-3-phosphate dehydrogenase (343 aa).

NAD(+)-binding positions include 13 to 14 (TI) and Gly-111. 140-142 (SCN) contributes to the D-glyceraldehyde 3-phosphate binding site. Cys-141 serves as the catalytic Nucleophile. Arg-169 provides a ligand contact to NAD(+). 195-196 (HA) contributes to the D-glyceraldehyde 3-phosphate binding site. Gln-303 lines the NAD(+) pocket.

It belongs to the glyceraldehyde-3-phosphate dehydrogenase family. Homotetramer.

It localises to the cytoplasm. It carries out the reaction D-glyceraldehyde 3-phosphate + phosphate + NADP(+) = (2R)-3-phospho-glyceroyl phosphate + NADPH + H(+). The enzyme catalyses D-glyceraldehyde 3-phosphate + phosphate + NAD(+) = (2R)-3-phospho-glyceroyl phosphate + NADH + H(+). It functions in the pathway carbohydrate degradation; glycolysis; pyruvate from D-glyceraldehyde 3-phosphate: step 1/5. This Sulfolobus acidocaldarius (strain ATCC 33909 / DSM 639 / JCM 8929 / NBRC 15157 / NCIMB 11770) protein is Glyceraldehyde-3-phosphate dehydrogenase.